Reading from the N-terminus, the 127-residue chain is Holo-[acyl-carrier-protein] synthase (127 aa).

Mg(2+) is bound by residues Asp-9 and Glu-58.

The protein belongs to the P-Pant transferase superfamily. AcpS family. The cofactor is Mg(2+).

It localises to the cytoplasm. The enzyme catalyses apo-[ACP] + CoA = holo-[ACP] + adenosine 3',5'-bisphosphate + H(+). Functionally, transfers the 4'-phosphopantetheine moiety from coenzyme A to a Ser of acyl-carrier-protein. This is Holo-[acyl-carrier-protein] synthase from Shewanella baltica (strain OS185).